Reading from the N-terminus, the 411-residue chain is Allantoate amidohydrolase (411 aa).

Residues His-81, Asp-92, Glu-127, and His-190 each coordinate Zn(2+). Allantoate contacts are provided by Arg-215, Asn-275, and Arg-288. His-382 provides a ligand contact to Zn(2+).

It belongs to the peptidase M20 family. Homodimer. Requires Zn(2+) as cofactor.

It is found in the cytoplasm. It carries out the reaction allantoate + H2O + 2 H(+) = (S)-2-ureidoglycine + NH4(+) + CO2. The protein operates within nitrogen metabolism; (S)-allantoin degradation. Sulfate could be an allosteric effector of the enzyme that is responsible for stabilizing substrate binding. In addition, this anion effector may act as a counterion during enzyme-mediated catalysis. Functionally, involved in the anaerobic nitrogen utilization via the assimilation of allantoin. Catalyzes specifically the hydrolysis of allantoate to yield CO2, NH3 and S-ureidoglycine, which is unstable and readily undergoes a second deamination by S-ureidoglycine aminohydrolase AllE to yield S-ureidoglycolate and NH3. In vivo, the spontaneous release of S-ureidoglycolate and ammonia from S-ureidoglycine appears to be too slow to sustain an efficient flux of nitrogen. This Escherichia coli (strain K12) protein is Allantoate amidohydrolase.